Consider the following 338-residue polypeptide: CDP-paratose 2-epimerase (338 aa).

Substrate is bound at residue Thr124. Residue Tyr164 is the Proton acceptor of the active site.

The protein belongs to the NAD(P)-dependent epimerase/dehydratase family. In terms of assembly, homotetramer. It depends on NAD(+) as a cofactor.

It carries out the reaction CDP-alpha-D-paratose = CDP-3,6-dideoxy-alpha-D-mannose. The protein operates within nucleotide-sugar biosynthesis; CDP-3,6-dideoxy-D-mannose biosynthesis; CDP-3,6-dideoxy-D-mannose from CTP and alpha-D-glucose 1-phosphate: step 5/5. Its function is as follows. Catalyzes the isomeration of CDP-paratose to CDP-tyvelose. This is CDP-paratose 2-epimerase (rfbE) from Salmonella typhi.